Here is a 599-residue protein sequence, read N- to C-terminus: Translation initiation factor IF-2 (599 aa).

Positions 111–278 constitute a tr-type G domain; sequence PRPPIITVMG…SILLLAEILE (168 aa). The G1 stretch occupies residues 120–127; it reads GHVDHGKT. 120–127 contacts GTP; it reads GHVDHGKT. Positions 145 to 149 are G2; that stretch reads GITQH. Residues 166–169 are G3; it reads DTPG. GTP-binding positions include 166 to 170 and 220 to 223; these read DTPGH and NKMD. Residues 220–223 form a G4 region; that stretch reads NKMD. The segment at 256–258 is G5; the sequence is SAL.

The protein belongs to the TRAFAC class translation factor GTPase superfamily. Classic translation factor GTPase family. IF-2 subfamily.

It localises to the cytoplasm. Its function is as follows. One of the essential components for the initiation of protein synthesis. Protects formylmethionyl-tRNA from spontaneous hydrolysis and promotes its binding to the 30S ribosomal subunits. Also involved in the hydrolysis of GTP during the formation of the 70S ribosomal complex. In Mesomycoplasma hyopneumoniae (strain 7448) (Mycoplasma hyopneumoniae), this protein is Translation initiation factor IF-2.